A 486-amino-acid polypeptide reads, in one-letter code: Cysteine--tRNA ligase (486 aa).

Zn(2+) is bound at residue Cys-30. Residues Pro-32 to Asn-42 carry the 'HIGH' region motif. Residues Cys-221, His-246, and Glu-250 each coordinate Zn(2+). The 'KMSKS' region motif lies at Lys-279–Ser-283. Residue Lys-282 coordinates ATP.

Belongs to the class-I aminoacyl-tRNA synthetase family. In terms of assembly, monomer. It depends on Zn(2+) as a cofactor.

It is found in the cytoplasm. The catalysed reaction is tRNA(Cys) + L-cysteine + ATP = L-cysteinyl-tRNA(Cys) + AMP + diphosphate. In Cereibacter sphaeroides (strain ATCC 17029 / ATH 2.4.9) (Rhodobacter sphaeroides), this protein is Cysteine--tRNA ligase.